A 218-amino-acid chain; its full sequence is Adenylate kinase (218 aa).

11–16 (GAGKGT) provides a ligand contact to ATP. The segment at 31–60 (STGDMFREAMANKTKVGLEAKSYIDKGNLV) is NMP. Residues threonine 32, arginine 37, 58–60 (NLV), 86–89 (GFPR), and glutamine 93 contribute to the AMP site. Residues 127 to 165 (ARYMCKNCGATYNKLSKQPKVEGTCDRCGSHEFYQREDD) are LID. Arginine 128 is an ATP binding site. The Zn(2+) site is built by cysteine 131 and cysteine 134. Residue 137-138 (TY) coordinates ATP. The Zn(2+) site is built by cysteine 151 and cysteine 154. Arginine 162 and arginine 173 together coordinate AMP. Glutamine 201 contributes to the ATP binding site.

It belongs to the adenylate kinase family. As to quaternary structure, monomer.

It localises to the cytoplasm. The enzyme catalyses AMP + ATP = 2 ADP. It participates in purine metabolism; AMP biosynthesis via salvage pathway; AMP from ADP: step 1/1. Functionally, catalyzes the reversible transfer of the terminal phosphate group between ATP and AMP. Plays an important role in cellular energy homeostasis and in adenine nucleotide metabolism. The polypeptide is Adenylate kinase (Lactobacillus helveticus (strain DPC 4571)).